The chain runs to 352 residues: Threonine synthase (352 aa).

At Lys59 the chain carries N6-(pyridoxal phosphate)lysine. Pyridoxal 5'-phosphate is bound by residues Asn85, Gly185–Asn189, and Thr314.

Belongs to the threonine synthase family. Pyridoxal 5'-phosphate is required as a cofactor.

It carries out the reaction O-phospho-L-homoserine + H2O = L-threonine + phosphate. The protein operates within amino-acid biosynthesis; L-threonine biosynthesis; L-threonine from L-aspartate: step 5/5. Catalyzes the gamma-elimination of phosphate from L-phosphohomoserine and the beta-addition of water to produce L-threonine. The chain is Threonine synthase (thrC) from Bacillus subtilis (strain 168).